Consider the following 279-residue polypeptide: Homeobox protein BarH-like 2 (279 aa).

Disordered regions lie at residues 110-137 (APGGEALASSESETEQPTPRQKKPRRSR) and 194-279 (KGGQ…PPLS). A compositionally biased stretch (polar residues) spans 118 to 128 (SSESETEQPTP). Positions 133 to 192 (PRRSRTIFTELQLMGLEKKFQKQKYLSTPDRLDLAQSLGLTQLQVKTWYQNRRMKWKKMV) form a DNA-binding region, homeobox. Positions 225-240 (NSQAQGQEQLEPSQGQ) are enriched in polar residues. Pro residues predominate over residues 261–279 (PPDPPQELPIPSSEPPPLS).

It belongs to the BAR homeobox family. In terms of tissue distribution, highly expressed in adult salivary gland and at much lower levels in mammary gland, kidney and placenta.

The protein localises to the nucleus. Its function is as follows. Transcription factor. Binds optimally to the DNA consensus sequence 5'-YYTAATGRTTTTY-3'. May control the expression of neural adhesion molecules such as L1 or Ng-CAM during embryonic development of both the central and peripherical nervous system. May be involved in controlling adhesive processes in keratinizing epithelia. This chain is Homeobox protein BarH-like 2 (BARX2), found in Homo sapiens (Human).